The primary structure comprises 535 residues: Ribonuclease Y (535 aa).

A helical transmembrane segment spans residues 4-24 (IILLIVSALIGLILGYALISI). The tract at residues 118-141 (ENLSSKEKVLDSKEQSLTDKSKHI) is disordered. One can recognise a KH domain in the interval 225–285 (TITSVHLPDD…IRREIARMTL (61 aa)). The HD domain maps to 351–444 (VLRHSVEVGK…VAAADALSSA (94 aa)).

The protein belongs to the RNase Y family.

Its subcellular location is the cell membrane. Its function is as follows. Endoribonuclease that initiates mRNA decay. This is Ribonuclease Y from Streptococcus pyogenes serotype M2 (strain MGAS10270).